Consider the following 197-residue polypeptide: Translation initiation factor IF-3 (197 aa).

Belongs to the IF-3 family. In terms of assembly, monomer.

Its subcellular location is the cytoplasm. Functionally, IF-3 binds to the 30S ribosomal subunit and shifts the equilibrium between 70S ribosomes and their 50S and 30S subunits in favor of the free subunits, thus enhancing the availability of 30S subunits on which protein synthesis initiation begins. In Prosthecochloris aestuarii (strain DSM 271 / SK 413), this protein is Translation initiation factor IF-3.